A 363-amino-acid polypeptide reads, in one-letter code: tRNA/tmRNA (uracil-C(5))-methyltransferase (363 aa).

Positions 187, 215, 220, 236, and 296 each coordinate S-adenosyl-L-methionine. Residue Cys321 is the Nucleophile of the active site. Glu355 acts as the Proton acceptor in catalysis.

It belongs to the class I-like SAM-binding methyltransferase superfamily. RNA M5U methyltransferase family. TrmA subfamily.

It carries out the reaction uridine(54) in tRNA + S-adenosyl-L-methionine = 5-methyluridine(54) in tRNA + S-adenosyl-L-homocysteine + H(+). The catalysed reaction is uridine(341) in tmRNA + S-adenosyl-L-methionine = 5-methyluridine(341) in tmRNA + S-adenosyl-L-homocysteine + H(+). Its function is as follows. Dual-specificity methyltransferase that catalyzes the formation of 5-methyluridine at position 54 (m5U54) in all tRNAs, and that of position 341 (m5U341) in tmRNA (transfer-mRNA). This is tRNA/tmRNA (uracil-C(5))-methyltransferase from Pseudomonas fluorescens.